Reading from the N-terminus, the 322-residue chain is Ferredoxin--NADP reductase (322 aa).

FAD is bound by residues aspartate 33, glutamine 41, tyrosine 46, alanine 86, phenylalanine 120, aspartate 278, and serine 319.

This sequence belongs to the ferredoxin--NADP reductase type 2 family. As to quaternary structure, homodimer. Requires FAD as cofactor.

The catalysed reaction is 2 reduced [2Fe-2S]-[ferredoxin] + NADP(+) + H(+) = 2 oxidized [2Fe-2S]-[ferredoxin] + NADPH. This chain is Ferredoxin--NADP reductase, found in Salinispora tropica (strain ATCC BAA-916 / DSM 44818 / JCM 13857 / NBRC 105044 / CNB-440).